Consider the following 164-residue polypeptide: V-type proton ATPase subunit c' (164 aa).

Over 1–16 (MDMVASDNVYAPLYAP) the chain is Lumenal. Residues 17–37 (FFGFAGCALAMILSCLGAAIG) form a helical membrane-spanning segment. Topologically, residues 38–59 (TAKSGIGIAGIGTFKPELIMKS) are cytoplasmic. A helical transmembrane segment spans residues 60 to 80 (LIPVVMSGILAIYGLVVAVLI). The Lumenal segment spans residues 81 to 98 (AGNLSPTEEYTLFNGFMH). A helical transmembrane segment spans residues 99-119 (LSCGLCVGFACLSSGYAIGIV). Residues 120-136 (GDVGVRKYMHQPRLFVG) lie on the Cytoplasmic side of the membrane. Residues 137–157 (IVLILIFSEVLGLYGMIIALI) traverse the membrane as a helical segment. Topologically, residues 158–164 (LNTKGSE) are lumenal.

This sequence belongs to the V-ATPase proteolipid subunit family. V-ATPase is a heteromultimeric enzyme composed of a peripheral catalytic V1 complex (components A to H) attached to an integral membrane V0 proton pore complex (components: a, c, c', c'', d, e, f and VOA1). The decameric c-ring forms the proton-conducting pore, and is composed of eight proteolipid subunits c, one subunit c' and one subunit c''.

The protein resides in the vacuole membrane. In terms of biological role, proton-conducting pore forming subunit of the V0 complex of vacuolar(H+)-ATPase (V-ATPase), a multisubunit enzyme composed of a peripheral complex (V1) that hydrolyzes ATP and a membrane integral complex (V0) that translocates protons. V-ATPase is responsible for acidifying and maintaining the pH of intracellular compartments. In Candida glabrata (strain ATCC 2001 / BCRC 20586 / JCM 3761 / NBRC 0622 / NRRL Y-65 / CBS 138) (Yeast), this protein is V-type proton ATPase subunit c' (VMA11).